Reading from the N-terminus, the 248-residue chain is DNA repair protein RecO (248 aa).

Belongs to the RecO family.

In terms of biological role, involved in DNA repair and RecF pathway recombination. This is DNA repair protein RecO from Rubrobacter xylanophilus (strain DSM 9941 / JCM 11954 / NBRC 16129 / PRD-1).